The following is a 99-amino-acid chain: UPF0213 protein spr1390 (99 aa).

Positions 3 to 78 constitute a GIY-YIG domain; that stretch reads HKAYMYVLEC…KRKKRPQKEE (76 aa).

This sequence belongs to the UPF0213 family.

In Streptococcus pneumoniae (strain ATCC BAA-255 / R6), this protein is UPF0213 protein spr1390.